Consider the following 120-residue polypeptide: Ribonuclease P protein component 2 (120 aa).

This sequence belongs to the eukaryotic/archaeal RNase P protein component 2 family. Consists of a catalytic RNA component and at least 4-5 protein subunits.

It localises to the cytoplasm. The catalysed reaction is Endonucleolytic cleavage of RNA, removing 5'-extranucleotides from tRNA precursor.. Functionally, part of ribonuclease P, a protein complex that generates mature tRNA molecules by cleaving their 5'-ends. The protein is Ribonuclease P protein component 2 of Thermococcus gammatolerans (strain DSM 15229 / JCM 11827 / EJ3).